Here is a 297-residue protein sequence, read N- to C-terminus: Ribosomal protein L11 methyltransferase (297 aa).

Positions 150, 171, 193, and 233 each coordinate S-adenosyl-L-methionine.

The protein belongs to the methyltransferase superfamily. PrmA family.

It is found in the cytoplasm. It carries out the reaction L-lysyl-[protein] + 3 S-adenosyl-L-methionine = N(6),N(6),N(6)-trimethyl-L-lysyl-[protein] + 3 S-adenosyl-L-homocysteine + 3 H(+). Methylates ribosomal protein L11. This chain is Ribosomal protein L11 methyltransferase, found in Laribacter hongkongensis (strain HLHK9).